Here is a 76-residue protein sequence, read N- to C-terminus: Adipogenesis regulatory factor (76 aa).

Expressed in adipose tissue (at protein level). Highly expressed in omental and subcutaneous adipose tissues. Expressed in heart, cornea, liver, kidney and spleen.

Its subcellular location is the nucleus. Functionally, plays a role in fat cell development; promotes adipogenic differentiation and stimulates transcription initiation of master adipogenesis factors like PPARG and CEBPA at early stages of preadipocyte differentiation. Its overexpression confers resistance to the anticancer chemotherapeutic drug cisplatin. In Homo sapiens (Human), this protein is Adipogenesis regulatory factor (ADIRF).